Consider the following 79-residue polypeptide: CDC42 small effector protein 1 (79 aa).

2 S-palmitoyl cysteine lipidation sites follow: Cys-10 and Cys-11. The CRIB domain occupies 30 to 43 (IGEPMNFVHLTHIG). Residues 48–79 (GAGDGLAMTGAVQEQMRSKGNRDRPWSNSRAL) are disordered. Residues 63 to 72 (MRSKGNRDRP) are compositionally biased toward basic and acidic residues.

Belongs to the CDC42SE/SPEC family. As to quaternary structure, interacts with CDC42 (in GTP-bound form). Interacts weakly with RAC1 and not at all with RHOA.

The protein localises to the cytoplasm. Its subcellular location is the cytoskeleton. It localises to the cell membrane. In terms of biological role, probably involved in the organization of the actin cytoskeleton by acting downstream of CDC42, inducing actin filament assembly. Alters CDC42-induced cell shape changes. In activated T-cells, may play a role in CDC42-mediated F-actin accumulation at the immunological synapse. May play a role in early contractile events in phagocytosis in macrophages. This Rattus norvegicus (Rat) protein is CDC42 small effector protein 1 (Cdc42se1).